The sequence spans 515 residues: DNA-directed RNA polymerase subunit Rpo2N (515 aa).

Belongs to the RNA polymerase beta chain family. As to quaternary structure, part of the RNA polymerase complex.

It is found in the cytoplasm. The catalysed reaction is RNA(n) + a ribonucleoside 5'-triphosphate = RNA(n+1) + diphosphate. DNA-dependent RNA polymerase (RNAP) catalyzes the transcription of DNA into RNA using the four ribonucleoside triphosphates as substrates. The Rpo2 subunit (Rpo2N and Rpo2C in this organism) is implicated in DNA promoter recognition and in nucleotide binding. The polypeptide is DNA-directed RNA polymerase subunit Rpo2N (Methanothermobacter thermautotrophicus (strain Winter) (Methanobacterium thermoautotrophicum)).